The sequence spans 729 residues: Kinesin-like protein KAR3 (729 aa).

The interval 1 to 48 is disordered; the sequence is MESLPRTPTKGRSTQHLSTPSPKNDILAMNGHKRRNTTTPPPKHTLLK. The interval 1–109 is globular; that stretch reads MESLPRTPTK…ENVNELNRTQ (109 aa). Residues 10-22 are compositionally biased toward polar residues; the sequence is KGRSTQHLSTPSP. The stretch at 110–357 forms a coiled coil; it reads AILFEKKATL…LEEYIKDTEL (248 aa). ATP contacts are provided by N386, R388, R392, E454, G477, S478, G479, K480, T481, F482, E554, K579, and T694. In terms of domain architecture, Kinesin motor spans 386–723; sequence NIRVYCRIRP…LRFASKVNST (338 aa).

Belongs to the TRAFAC class myosin-kinesin ATPase superfamily. Kinesin family. NCD subfamily. Interacts with CIK1; the interaction is direct. Interacts with VIK1; the interaction is direct.

The protein localises to the cytoplasm. Its subcellular location is the cytoskeleton. It localises to the microtubule organizing center. It is found in the spindle pole body. The protein resides in the nucleus. The protein localises to the chromosome. Its subcellular location is the spindle. It carries out the reaction ATP + H2O = ADP + phosphate + H(+). The catalysed reaction is ATP + H2O + a kinesin associated with a microtubule at position (n) = ADP + phosphate + a kinesin associated with a microtubule at position (n-1, toward the minus end).. Functionally, minus end-directed microtubule (MT) motor involved in spindle midzone assembly, poleward transport of newly captured kinetochores along the lateral side of MTs, karyogamy (nuclear fusion) during mating, and with an essential function in meiosis I. Functions together with the accessory proteins CIK1 or VIK1. Drives the poleward transport of newly captured kinetochores along the lateral side of MTs, both during S-phase and during M-phase. To contribute to spindle midzone assembly during mitotic metaphase, the nuclear KAR3-CIK1 motor cross-links anti-parallel microtubules to align them on the spindle axis; as the motor travels polewards splayed microtubules are pulled into alignment. During the karyogamy (nuclear fusion) step of mating, KAR3-CIK1 cross-links antiparallel cytoplasmic microtubules emanating from the spindle pole bodies of mating partners; the motor activity of KAR3 creates the force that pulls the nuclei together by sliding cross-linked microtubules past one another. KAR3-CIK1 promotes microtubule shortening predominantly from the microtubule plus-end. Together with cytoplasmic VIK1, may act to stabilize microtubules. Requires accessory protein VIK1 for spindle pole body localization and to allow the CIN8 and KIP1 motors to generate outwardly directed spindle forces. Essential during meiosis I. The ATPase activity is stimulated by microtubule-binding. The polypeptide is Kinesin-like protein KAR3 (KAR3) (Saccharomyces cerevisiae (strain ATCC 204508 / S288c) (Baker's yeast)).